Reading from the N-terminus, the 404-residue chain is Major outer membrane porin (404 aa).

The N-terminal stretch at 1–22 (MKKLLKSVLAFAVLGSASSLHA) is a signal peptide. The segment at 85–110 (GPVPTTTDTDAAADITTSTPRENPAY) is disordered. Over residues 89–103 (TTTDTDAAADITTST) the composition is skewed to low complexity.

The protein belongs to the chlamydial porin (CP) (TC 1.B.2) family. In terms of assembly, part of a disulfide cross-linked outer membrane complex (COMC) composed of the major outer membrane porin (MOMP), the small cysteine-rich protein (OmcA) and the large cysteine-rich periplasmic protein (OmcB).

The protein resides in the cell outer membrane. In terms of biological role, in elementary bodies (EBs, the infectious stage, which is able to survive outside the host cell) provides the structural integrity of the outer envelope through disulfide cross-links with the small cysteine-rich protein and the large cysteine-rich periplasmic protein. It has been described in publications as the Sarkosyl-insoluble COMC (Chlamydia outer membrane complex), and serves as the functional equivalent of peptidoglycan. Functionally, permits diffusion of specific solutes through the outer membrane. This Chlamydia muridarum protein is Major outer membrane porin (ompA).